The primary structure comprises 203 residues: Large ribosomal subunit protein bL25 (203 aa).

Belongs to the bacterial ribosomal protein bL25 family. CTC subfamily. Part of the 50S ribosomal subunit; part of the 5S rRNA/L5/L18/L25 subcomplex. Contacts the 5S rRNA. Binds to the 5S rRNA independently of L5 and L18.

Its function is as follows. This is one of the proteins that binds to the 5S RNA in the ribosome where it forms part of the central protuberance. In Rickettsia peacockii (strain Rustic), this protein is Large ribosomal subunit protein bL25.